The following is a 146-amino-acid chain: Cyanate hydratase (146 aa).

Residues Arg87, Glu90, and Ser113 contribute to the active site.

The protein belongs to the cyanase family.

It carries out the reaction cyanate + hydrogencarbonate + 3 H(+) = NH4(+) + 2 CO2. Its function is as follows. Catalyzes the reaction of cyanate with bicarbonate to produce ammonia and carbon dioxide. The sequence is that of Cyanate hydratase from Teredinibacter turnerae (strain ATCC 39867 / T7901).